A 254-amino-acid polypeptide reads, in one-letter code: Glucosamine-6-phosphate deaminase (254 aa).

Residue aspartate 67 is the Proton acceptor; for enolization step of the active site. Residue asparagine 136 is the For ring-opening step of the active site. The active-site Proton acceptor; for ring-opening step is the histidine 138. Residue glutamate 143 is the For ring-opening step of the active site.

The protein belongs to the glucosamine/galactosamine-6-phosphate isomerase family. NagB subfamily.

It catalyses the reaction alpha-D-glucosamine 6-phosphate + H2O = beta-D-fructose 6-phosphate + NH4(+). It functions in the pathway amino-sugar metabolism; N-acetylneuraminate degradation; D-fructose 6-phosphate from N-acetylneuraminate: step 5/5. In terms of biological role, catalyzes the reversible isomerization-deamination of glucosamine 6-phosphate (GlcN6P) to form fructose 6-phosphate (Fru6P) and ammonium ion. This chain is Glucosamine-6-phosphate deaminase, found in Brevibacillus brevis (strain 47 / JCM 6285 / NBRC 100599).